Reading from the N-terminus, the 431-residue chain is MSFLVSKPERIRRWVSEKFIVEGLRDLELFGEQPPGDTRRKTNDASSESIASFSKQEVMSSFLPEGGCYELLTVIGKGFEDLMTVNLARYKPTGEYVTVRRINLEACSNEMVTFLQGELHVSKLFNHPNIVPYRATFIADNELWVVTSFMAYGSAKDLICTHFMDGMNELAIAYILQGVLKALDYIHHMGYVHRSVKASHILISVDGKVYLSGLRSNLSMISHGQRQRVVHDFPKYSVKVLPWLSPEVLQQNLQGYDAKSDIYSVGITACELANGHVPFKDMPATQMLLEKLNGTVPCLLDTSTIPAEELTMSPSRSVANSGLSDSLTTSTPRPSNGDSPSHPYHRTFSPHFHHFVEQCLQRNPDARPSASTLLNHSFFKQIKRRASEALPELLRPVTPITNFEGSQSQDHSGIFGLVTNLEELEVDDWEF.

Phosphoserine occurs at positions 2 and 46. The Protein kinase domain maps to Y69–F379. Positions L310–T347 are disordered. A compositionally biased stretch (polar residues) spans M312–S339. 2 positions are modified to phosphothreonine; by LKB1: T329 and T419.

This sequence belongs to the protein kinase superfamily. STE Ser/Thr protein kinase family. STE20 subfamily. As to quaternary structure, component of a trimeric complex composed of STK11/LKB1, STRAD (STRADA or STRADB) and CAB39/MO25 (CAB39/MO25alpha or CAB39L/MO25beta): the complex tethers STK11/LKB1 in the cytoplasm and stimulates its catalytic activity.

It localises to the nucleus. Its subcellular location is the cytoplasm. Pseudokinase which, in complex with CAB39/MO25 (CAB39/MO25alpha or CAB39L/MO25beta), binds to and activates STK11/LKB1. Adopts a closed conformation typical of active protein kinases and binds STK11/LKB1 as a pseudosubstrate, promoting conformational change of STK11/LKB1 in an active conformation. The protein is STE20-related kinase adapter protein alpha (STRADA) of Homo sapiens (Human).